Here is a 235-residue protein sequence, read N- to C-terminus: SMN complex subunit yip11/gem2 (235 aa).

A disordered region spans residues 1-34; it reads MPSKRKRNPLQYQTSGSLDEETNQRSAFPQIDNN. Over residues 24–34 the composition is skewed to polar residues; sequence QRSAFPQIDNN. 2 positions are modified to phosphoserine: Ser117 and Ser118.

Belongs to the gemin-2 family. As to quaternary structure, part of the core SMN complex at least composed of smn1, yip11/gem2, gem6, gem7 and gem8. Interacts with smn1; the interaction is direct.

It is found in the nucleus. Its function is as follows. The SMN complex catalyzes the assembly of small nuclear ribonucleoproteins (snRNPs), the building blocks of the spliceosome, and thereby plays an important role in the splicing of cellular pre-mRNAs. Most spliceosomal snRNPs contain a common set of Sm proteins smb1, smd1, smd2, smd3, sme1, smf1 and smg1 that assemble in a heptameric protein ring on the Sm site of the small nuclear RNA to form the core snRNP. In the cytosol, the Sm proteins smd1, smd2, sme1, smf1 and smg1 (5Sm) are trapped in an inactive 6S pICln-Sm complex by the chaperone saf5. To complete assembly of core snRNPs, the SMN complex accepts 5Sm from saf5. Binding of snRNA inside 5Sm ultimately triggers eviction of the SMN complex, thereby allowing binding of smd3 and smb1 to complete assembly of the core snRNP. Within the SMN complex, yip11/gem2 constrains the conformation of 5Sm, thereby promoting 5Sm binding to snRNA containing the snRNP code (a nonameric Sm site and a 3'-adjacent stem-loop), thus preventing progression of assembly until a cognate substrate is bound. The protein is SMN complex subunit yip11/gem2 (yip11) of Schizosaccharomyces pombe (strain 972 / ATCC 24843) (Fission yeast).